Reading from the N-terminus, the 308-residue chain is Apolipoprotein F (308 aa).

Belongs to the apolipoprotein F family.

Its subcellular location is the secreted. Functionally, minor apolipoprotein that associates with LDL. Inhibits cholesteryl ester transfer protein (CETP) activity and appears to be an important regulator of cholesterol transport. Also associates to a lesser degree with VLDL, Apo-AI and Apo-AII. In Rattus norvegicus (Rat), this protein is Apolipoprotein F (Apof).